The following is a 117-amino-acid chain: Large ribosomal subunit protein uL18 (117 aa).

The protein belongs to the universal ribosomal protein uL18 family. As to quaternary structure, part of the 50S ribosomal subunit; part of the 5S rRNA/L5/L18/L25 subcomplex. Contacts the 5S and 23S rRNAs.

Its function is as follows. This is one of the proteins that bind and probably mediate the attachment of the 5S RNA into the large ribosomal subunit, where it forms part of the central protuberance. In Actinobacillus succinogenes (strain ATCC 55618 / DSM 22257 / CCUG 43843 / 130Z), this protein is Large ribosomal subunit protein uL18.